Consider the following 529-residue polypeptide: Beta-hexosaminidase subunit alpha (529 aa).

Residues 1-22 (MAGSTLRFSLLLAAAFAGRATA) form the signal peptide. The propeptide occupies 23-88 (LWPWPQYIQT…RFPHPIEKRH (66 aa)). Cysteines 58 and 104 form a disulfide. N-linked (GlcNAc...) asparagine glycans are attached at residues asparagine 115, asparagine 157, and asparagine 295. A disulfide bridge connects residues cysteine 277 and cysteine 328. The Proton donor role is filled by glutamate 323. The tract at residues 423–424 (NH) is critical for hydrolysis GM2 gangliosides. Cysteine 505 and cysteine 522 are joined by a disulfide.

This sequence belongs to the glycosyl hydrolase 20 family. There are 3 beta-hexosaminidase isozymes: isozyme A (hexosaminidase A) is a heterodimer composed of one subunit alpha and one subunit beta (chain A and B); isozyme B (hexosaminidase B) is a homodimer of two beta subunits (two chains A and B); isozyme S (hexosaminidase S) is a homodimer of two alpha subunits. The composition of the dimer (isozyme A versus isozyme S) has a significant effect on the substrate specificity of the alpha subunit active site.

It localises to the lysosome. It carries out the reaction Hydrolysis of terminal non-reducing N-acetyl-D-hexosamine residues in N-acetyl-beta-D-hexosaminides.. It catalyses the reaction N-acetyl-beta-D-galactosaminyl-(1-&gt;4)-beta-D-3-sulfogalactosyl-(1-&gt;4)-beta-D-glucosyl-(1&lt;-&gt;1')-ceramide + H2O = a beta-D-3-sulfogalactosyl-(1-&gt;4)-beta-D-glucosyl-(1&lt;-&gt;1')-ceramide + N-acetyl-beta-D-galactosamine. The catalysed reaction is a ganglioside GM2 (d18:1(4E)) + H2O = a ganglioside GM3 (d18:1(4E)) + N-acetyl-beta-D-galactosamine. The enzyme catalyses a ganglioside GM2 + H2O = a ganglioside GM3 + N-acetyl-beta-D-galactosamine. It carries out the reaction beta-D-GalNAc-(1-&gt;4)-alpha-L-IdoA-(1-&gt;3)-beta-D-GalNAc-4-sulfate-(1-&gt;4)-alpha-L-IdoA-(1-&gt;3)-D-GalNAc-4-sulfate + H2O = alpha-L-IdoA-(1-&gt;3)-beta-D-GalNAc-4-sulfate-(1-&gt;4)-alpha-L-IdoA-(1-&gt;3)-D-GalNAc-4-sulfate + N-acetyl-D-galactosamine. It catalyses the reaction N-acetyl-beta-D-6-sulfogalactosaminyl-(1-&gt;4)-alpha-L-iduronyl-(1-&gt;3)-N-acetyl-D-6-sulfogalactosamine + H2O = alpha-L-iduronyl-(1-&gt;3)-N-acetyl-D-6-sulfogalactosamine + N-acetyl-D-6-sulfogalactosamine. Addition of GM2A stimulates the hydrolysis of sulfated glycosphingolipid SM2 and the ganglioside GM2. Hydrolyzes the non-reducing end N-acetyl-D-hexosamine and/or sulfated N-acetyl-D-hexosamine of glycoconjugates, such as the oligosaccharide moieties from proteins and neutral glycolipids, or from certain mucopolysaccharides. The isozyme S is as active as the isozyme A on the anionic bis-sulfated glycans, the chondroitin-6-sulfate trisaccharide (C6S-3), and the dermatan sulfate pentasaccharide, and the sulfated glycosphingolipid SM2. The isozyme B does not hydrolyze each of these substrates, however hydrolyzes efficiently neutral oligosaccharide. Only the isozyme A is responsible for the degradation of GM2 gangliosides in the presence of GM2A. The chain is Beta-hexosaminidase subunit alpha from Bos taurus (Bovine).